A 316-amino-acid chain; its full sequence is Coproporphyrin III ferrochelatase (316 aa).

Residues Tyr-13, Arg-30, Arg-46 to Tyr-47, Ser-54, and Tyr-125 contribute to the Fe-coproporphyrin III site. Fe(2+)-binding residues include His-183 and Glu-264.

This sequence belongs to the ferrochelatase family.

It localises to the cytoplasm. The enzyme catalyses Fe-coproporphyrin III + 2 H(+) = coproporphyrin III + Fe(2+). Its pathway is porphyrin-containing compound metabolism; protoheme biosynthesis. Its function is as follows. Involved in coproporphyrin-dependent heme b biosynthesis. Catalyzes the insertion of ferrous iron into coproporphyrin III to form Fe-coproporphyrin III. The sequence is that of Coproporphyrin III ferrochelatase from Geobacillus thermodenitrificans (strain NG80-2).